Consider the following 545-residue polypeptide: Pseudouridylate synthase RPUSD2 (545 aa).

The interval 48–121 (GLRASHQQNG…PPPKKRRTGV (74 aa)) is disordered. S68 is subject to Phosphoserine. Residue D274 is part of the active site. T477 is modified (phosphothreonine).

It belongs to the pseudouridine synthase RluA family.

The enzyme catalyses a uridine in mRNA = a pseudouridine in mRNA. Functionally, pseudouridine synthase that catalyzes pseudouridylation of mRNAs. This is Pseudouridylate synthase RPUSD2 from Homo sapiens (Human).